Reading from the N-terminus, the 233-residue chain is Uridylate kinase (233 aa).

7–10 (KISG) is an ATP binding site. Gly-49 provides a ligand contact to UMP. The ATP site is built by Gly-50 and Arg-54. UMP is bound by residues Asp-68 and 129 to 136 (TGNPFFTT). Thr-156, Tyr-162, and Asp-165 together coordinate ATP.

The protein belongs to the UMP kinase family. In terms of assembly, homohexamer.

The protein localises to the cytoplasm. It catalyses the reaction UMP + ATP = UDP + ADP. The protein operates within pyrimidine metabolism; CTP biosynthesis via de novo pathway; UDP from UMP (UMPK route): step 1/1. Inhibited by UTP. Its function is as follows. Catalyzes the reversible phosphorylation of UMP to UDP. The polypeptide is Uridylate kinase (Neorickettsia sennetsu (strain ATCC VR-367 / Miyayama) (Ehrlichia sennetsu)).